The sequence spans 63 residues: Overexpressed in colon carcinoma 1 protein homolog (63 aa).

The segment covering 1-10 has biased composition (polar residues); the sequence is MGCGNSTATS. The tract at residues 1–39 is disordered; it reads MGCGNSTATSAAAGRGPTGAVKDTTEDSITEDDKRRNYG.

The protein belongs to the OCC1 family.

In Mus musculus (Mouse), this protein is Overexpressed in colon carcinoma 1 protein homolog.